The chain runs to 334 residues: PDZ domain-containing protein MAGIX (334 aa).

Composition is skewed to basic and acidic residues over residues 1–13 (MEPRTGDAADPRG) and 209–224 (LETHPGKPRGVGEPRK). Disordered stretches follow at residues 1-26 (MEPRTGDAADPRGSRGGRGPSPLAGP) and 209-306 (LETH…WLVP). The PDZ domain occupies 125-209 (SVELVRGYAG…QLHLVIRRPL (85 aa)). Residues 244–260 (GSRSSSTSLVQHPPSRT) are compositionally biased toward polar residues. Phosphoserine is present on Ser272.

The polypeptide is PDZ domain-containing protein MAGIX (MAGIX) (Homo sapiens (Human)).